The sequence spans 592 residues: Arginine--tRNA ligase (592 aa).

Positions 128-138 match the 'HIGH' region motif; it reads ANPTGPLHVGH.

This sequence belongs to the class-I aminoacyl-tRNA synthetase family. Monomer.

It is found in the cytoplasm. The enzyme catalyses tRNA(Arg) + L-arginine + ATP = L-arginyl-tRNA(Arg) + AMP + diphosphate. This chain is Arginine--tRNA ligase, found in Hydrogenovibrio crunogenus (strain DSM 25203 / XCL-2) (Thiomicrospira crunogena).